We begin with the raw amino-acid sequence, 287 residues long: Bifunctional protein FolD (287 aa).

NADP(+) is bound by residues 171–173 (GHS) and I237.

It belongs to the tetrahydrofolate dehydrogenase/cyclohydrolase family. Homodimer.

It carries out the reaction (6R)-5,10-methylene-5,6,7,8-tetrahydrofolate + NADP(+) = (6R)-5,10-methenyltetrahydrofolate + NADPH. The catalysed reaction is (6R)-5,10-methenyltetrahydrofolate + H2O = (6R)-10-formyltetrahydrofolate + H(+). It functions in the pathway one-carbon metabolism; tetrahydrofolate interconversion. Functionally, catalyzes the oxidation of 5,10-methylenetetrahydrofolate to 5,10-methenyltetrahydrofolate and then the hydrolysis of 5,10-methenyltetrahydrofolate to 10-formyltetrahydrofolate. This chain is Bifunctional protein FolD, found in Methanosarcina barkeri (strain Fusaro / DSM 804).